Reading from the N-terminus, the 92-residue chain is Co-chaperonin GroES (92 aa).

Belongs to the GroES chaperonin family. Heptamer of 7 subunits arranged in a ring. Interacts with the chaperonin GroEL.

The protein resides in the cytoplasm. Together with the chaperonin GroEL, plays an essential role in assisting protein folding. The GroEL-GroES system forms a nano-cage that allows encapsulation of the non-native substrate proteins and provides a physical environment optimized to promote and accelerate protein folding. GroES binds to the apical surface of the GroEL ring, thereby capping the opening of the GroEL channel. The chain is Co-chaperonin GroES from Thermotoga neapolitana.